Here is a 325-residue protein sequence, read N- to C-terminus: Protease HtpX homolog 2 (325 aa).

The next 2 helical transmembrane spans lie at 10 to 30 and 41 to 61; these read LNMALATLGITLLGFALALAV and VGLILSILIFIFFLNIIQWLF. Residue His-147 coordinates Zn(2+). Residue Glu-148 is part of the active site. His-151 is a Zn(2+) binding site. Helical transmembrane passes span 159–179 and 196–216; these read LLMAVGLIPALIYYLGWWLFW and LVFLLGIIMMAVSFVFQLLVL. Glu-223 is a binding site for Zn(2+).

It belongs to the peptidase M48B family. It depends on Zn(2+) as a cofactor.

Its subcellular location is the cell membrane. This is Protease HtpX homolog 2 from Saccharolobus solfataricus (strain ATCC 35092 / DSM 1617 / JCM 11322 / P2) (Sulfolobus solfataricus).